Reading from the N-terminus, the 453-residue chain is Bifunctional protein GlmU (453 aa).

The tract at residues 1 to 225 (MNIVILAAGT…DWETLGVNSK (225 aa)) is pyrophosphorylase. UDP-N-acetyl-alpha-D-glucosamine is bound by residues 6–9 (LAAG), Lys-20, Gln-71, 76–77 (GT), 98–100 (YGD), Gly-135, Glu-150, Asn-165, and Asn-223. Position 100 (Asp-100) interacts with Mg(2+). Asn-223 is a binding site for Mg(2+). The tract at residues 226–246 (AQLAELERIHQRNVADALLVE) is linker. Residues 247-453 (GVTLADPARV…GYVRPVKKKS (207 aa)) are N-acetyltransferase. Arg-329 and Lys-347 together coordinate UDP-N-acetyl-alpha-D-glucosamine. His-359 acts as the Proton acceptor in catalysis. Residues Tyr-362 and Asn-373 each coordinate UDP-N-acetyl-alpha-D-glucosamine. Acetyl-CoA is bound by residues Ala-376, 382 to 383 (NY), Ser-401, and Ala-419.

It in the N-terminal section; belongs to the N-acetylglucosamine-1-phosphate uridyltransferase family. This sequence in the C-terminal section; belongs to the transferase hexapeptide repeat family. In terms of assembly, homotrimer. Mg(2+) is required as a cofactor.

It is found in the cytoplasm. It catalyses the reaction alpha-D-glucosamine 1-phosphate + acetyl-CoA = N-acetyl-alpha-D-glucosamine 1-phosphate + CoA + H(+). It carries out the reaction N-acetyl-alpha-D-glucosamine 1-phosphate + UTP + H(+) = UDP-N-acetyl-alpha-D-glucosamine + diphosphate. It functions in the pathway nucleotide-sugar biosynthesis; UDP-N-acetyl-alpha-D-glucosamine biosynthesis; N-acetyl-alpha-D-glucosamine 1-phosphate from alpha-D-glucosamine 6-phosphate (route II): step 2/2. It participates in nucleotide-sugar biosynthesis; UDP-N-acetyl-alpha-D-glucosamine biosynthesis; UDP-N-acetyl-alpha-D-glucosamine from N-acetyl-alpha-D-glucosamine 1-phosphate: step 1/1. The protein operates within bacterial outer membrane biogenesis; LPS lipid A biosynthesis. In terms of biological role, catalyzes the last two sequential reactions in the de novo biosynthetic pathway for UDP-N-acetylglucosamine (UDP-GlcNAc). The C-terminal domain catalyzes the transfer of acetyl group from acetyl coenzyme A to glucosamine-1-phosphate (GlcN-1-P) to produce N-acetylglucosamine-1-phosphate (GlcNAc-1-P), which is converted into UDP-GlcNAc by the transfer of uridine 5-monophosphate (from uridine 5-triphosphate), a reaction catalyzed by the N-terminal domain. The protein is Bifunctional protein GlmU of Burkholderia vietnamiensis (strain G4 / LMG 22486) (Burkholderia cepacia (strain R1808)).